The following is a 718-amino-acid chain: Polyribonucleotide nucleotidyltransferase (718 aa).

The Mg(2+) site is built by aspartate 493 and aspartate 499. Residues 560-619 enclose the KH domain; sequence PRVIKKQIDPDKIRNVIGPGGKMINKIIDETGVKIDIEPDGLIYISSSDAEQAEQAIKAI. The S1 motif domain maps to 629-697; that stretch reads GEVYLGKVVR…ERGRINLSRK (69 aa). Residues 695 to 718 are disordered; that stretch reads SRKQALGEEDGKTNNDDKKSTKKT. Over residues 699–718 the composition is skewed to basic and acidic residues; sequence ALGEEDGKTNNDDKKSTKKT.

It belongs to the polyribonucleotide nucleotidyltransferase family. Requires Mg(2+) as cofactor.

It is found in the cytoplasm. It catalyses the reaction RNA(n+1) + phosphate = RNA(n) + a ribonucleoside 5'-diphosphate. Functionally, involved in mRNA degradation. Catalyzes the phosphorolysis of single-stranded polyribonucleotides processively in the 3'- to 5'-direction. The sequence is that of Polyribonucleotide nucleotidyltransferase from Natranaerobius thermophilus (strain ATCC BAA-1301 / DSM 18059 / JW/NM-WN-LF).